We begin with the raw amino-acid sequence, 744 residues long: Receptor-like serine/threonine-protein kinase ALE2 (744 aa).

Residues 1-19 (MRNFAMLLLLILLLHSLAS) form the signal peptide. At 20-260 (FPICFARLFP…SQGIGFRTIA (241 aa)) the chain is on the extracellular side. Pro residues predominate over residues 59–68 (PAFSPNPSRI). The interval 59 to 79 (PAFSPNPSRIPPLRHKGHHRH) is disordered. The segment covering 70 to 79 (PLRHKGHHRH) has biased composition (basic residues). Residues Asn87, Asn186, Asn204, Asn243, and Asn249 are each glycosylated (N-linked (GlcNAc...) asparagine). The chain crosses the membrane as a helical span at residues 261 to 281 (IIALSGFVLILVLVGAISIIV). Topologically, residues 282–744 (KWKKIGKSSN…HLWSGNGDWL (463 aa)) are cytoplasmic. A Protein kinase domain is found at 349–619 (FSAKRVLGEG…GEVVQALKLI (271 aa)). Residues 355–363 (LGEGGFGRV) and Lys377 contribute to the ATP site. Asp470 functions as the Proton acceptor in the catalytic mechanism. Disordered stretches follow at residues 681 to 705 (EDMENRPHSASSIPRVGGLILPNRS) and 722 to 744 (GSMSEHGGPSSSRHLWSGNGDWL).

Belongs to the protein kinase superfamily. Ser/Thr protein kinase family. In terms of processing, autophosphorylated and phosphorylated by ACR4.

It is found in the cell membrane. The enzyme catalyses L-seryl-[protein] + ATP = O-phospho-L-seryl-[protein] + ADP + H(+). It catalyses the reaction L-threonyl-[protein] + ATP = O-phospho-L-threonyl-[protein] + ADP + H(+). In terms of biological role, required during the differentiation of the protoderm into shoots epidermis and cuticle. This chain is Receptor-like serine/threonine-protein kinase ALE2 (ALE2), found in Arabidopsis thaliana (Mouse-ear cress).